Consider the following 246-residue polypeptide: Probable transcriptional regulatory protein HAPS_0943 (246 aa).

This sequence belongs to the TACO1 family.

The protein resides in the cytoplasm. The sequence is that of Probable transcriptional regulatory protein HAPS_0943 from Glaesserella parasuis serovar 5 (strain SH0165) (Haemophilus parasuis).